A 494-amino-acid chain; its full sequence is ATP synthase subunit beta, chloroplastic (494 aa).

172 to 179 (GGAGVGKT) is a binding site for ATP.

This sequence belongs to the ATPase alpha/beta chains family. As to quaternary structure, F-type ATPases have 2 components, CF(1) - the catalytic core - and CF(0) - the membrane proton channel. CF(1) has five subunits: alpha(3), beta(3), gamma(1), delta(1), epsilon(1). CF(0) has four main subunits: a(1), b(1), b'(1) and c(9-12).

The protein resides in the plastid. Its subcellular location is the chloroplast thylakoid membrane. The enzyme catalyses ATP + H2O + 4 H(+)(in) = ADP + phosphate + 5 H(+)(out). Functionally, produces ATP from ADP in the presence of a proton gradient across the membrane. The catalytic sites are hosted primarily by the beta subunits. This Physcomitrium patens (Spreading-leaved earth moss) protein is ATP synthase subunit beta, chloroplastic.